The primary structure comprises 467 residues: Glutamine synthetase (467 aa).

Residues 11–95 enclose the GS beta-grasp domain; sequence HDVKWIDLRF…IVCDIIEPST (85 aa). Residues 103-467 enclose the GS catalytic domain; sequence PRAIARRAEE…PLEYDLYYSV (365 aa). Residues glutamate 128 and glutamate 130 each coordinate Mg(2+). Glutamate 206 is a binding site for ATP. Residues glutamate 211 and glutamate 219 each contribute to the Mg(2+) site. L-glutamate contacts are provided by residues 263-264 and glycine 264; that span reads NG. Histidine 268 contributes to the Mg(2+) binding site. ATP contacts are provided by residues 270 to 272 and serine 272; that span reads HMS. 3 residues coordinate L-glutamate: arginine 320, glutamate 326, and arginine 338. Residues arginine 338, arginine 343, and lysine 351 each coordinate ATP. Glutamate 356 is a binding site for Mg(2+). Arginine 358 lines the L-glutamate pocket. The residue at position 396 (tyrosine 396) is an O-AMP-tyrosine.

It belongs to the glutamine synthetase family. Oligomer of 12 subunits arranged in the form of two hexameric ring. Requires Mg(2+) as cofactor.

Its subcellular location is the cytoplasm. The catalysed reaction is L-glutamate + NH4(+) + ATP = L-glutamine + ADP + phosphate + H(+). Its activity is regulated as follows. The activity of this enzyme could be controlled by adenylation under conditions of abundant glutamine. Catalyzes the ATP-dependent biosynthesis of glutamine from glutamate and ammonia. The sequence is that of Glutamine synthetase from Azotobacter vinelandii.